Consider the following 96-residue polypeptide: Putative pterin-4-alpha-carbinolamine dehydratase (96 aa).

The protein belongs to the pterin-4-alpha-carbinolamine dehydratase family.

The catalysed reaction is (4aS,6R)-4a-hydroxy-L-erythro-5,6,7,8-tetrahydrobiopterin = (6R)-L-erythro-6,7-dihydrobiopterin + H2O. This is Putative pterin-4-alpha-carbinolamine dehydratase from Prochlorococcus marinus (strain MIT 9313).